The chain runs to 382 residues: Beta-1,4-galactosyltransferase 6 (382 aa).

Residues 1–15 (MSALKRMMRVSNRSL) are Cytoplasmic-facing. Residues 16–35 (IAFIFFFSLSTSCLYFIYVA) traverse the membrane as a helical; Signal-anchor for type II membrane protein segment. At 36–382 (PGIANTYLFM…MPELAPVEDY (347 aa)) the chain is on the lumenal side. N-linked (GlcNAc...) asparagine glycosylation is found at Asn71, Asn75, Asn83, Asn84, Asn99, and Asn122. A disulfide bridge links Cys108 with Cys152. UDP-alpha-D-galactose contacts are provided by residues 163-167 (PFRNR), 202-204 (FNR), 229-230 (VD), Tyr258, and Trp290. A disulfide bridge links Cys223 with Cys242. Residue Asp230 participates in Mn(2+) binding. 292 to 295 (GEDD) is a binding site for N-acetyl-D-glucosamine. Asn307 is a glycosylation site (N-linked (GlcNAc...) asparagine). Residue His323 coordinates Mn(2+). Residue 323 to 324 (HH) participates in UDP-alpha-D-galactose binding. Arg334 provides a ligand contact to N-acetyl-D-glucosamine. Asn367 carries N-linked (GlcNAc...) asparagine glycosylation.

This sequence belongs to the glycosyltransferase 7 family. Requires Mn(2+) as cofactor. Mg(2+) is required as a cofactor. Ca(2+) serves as cofactor. As to expression, highest expression in brain with lower levels found in lungs, heart, skeletal muscle and kidney. Lowest expression in testis, liver and spleen.

The protein resides in the golgi apparatus. It is found in the golgi stack membrane. It catalyses the reaction a beta-D-glucosyl-(1&lt;-&gt;1')-N-acylsphing-4-enine + UDP-alpha-D-galactose = a beta-D-Gal-(1-&gt;4)-beta-D-Glc-(1&lt;-&gt;1)-Cer(d18:1(4E)) + UDP + H(+). Its pathway is protein modification; protein glycosylation. It functions in the pathway sphingolipid metabolism. Its activity is regulated as follows. Inhibited by EDTA. Its function is as follows. Catalyzes the synthesis of lactosylceramide (LacCer) via the transfer of galactose from UDP-galactose to glucosylceramide (GlcCer). LacCer is the starting point in the biosynthesis of all gangliosides (membrane-bound glycosphingolipids) which play pivotal roles in the CNS including neuronal maturation and axonal and myelin formation. In Rattus norvegicus (Rat), this protein is Beta-1,4-galactosyltransferase 6.